The primary structure comprises 292 residues: UPF0725 protein At4g28920 (292 aa).

Residues 1–17 (MSENDSSESDIEMDPEE) are compositionally biased toward acidic residues. The interval 1–24 (MSENDSSESDIEMDPEEEKVYRRQ) is disordered.

It belongs to the UPF0725 (EMB2204) family.

This Arabidopsis thaliana (Mouse-ear cress) protein is UPF0725 protein At4g28920.